A 216-amino-acid polypeptide reads, in one-letter code: Large ribosomal subunit protein uL3 (216 aa).

The segment at 134–153 (RATHGNSRSHNVPGSIGMAQ) is disordered. Glutamine 153 is modified (N5-methylglutamine).

This sequence belongs to the universal ribosomal protein uL3 family. Part of the 50S ribosomal subunit. Forms a cluster with proteins L14 and L19. In terms of processing, methylated by PrmB.

One of the primary rRNA binding proteins, it binds directly near the 3'-end of the 23S rRNA, where it nucleates assembly of the 50S subunit. This is Large ribosomal subunit protein uL3 from Cupriavidus pinatubonensis (strain JMP 134 / LMG 1197) (Cupriavidus necator (strain JMP 134)).